The sequence spans 1933 residues: WD repeat-containing protein 81 (1933 aa).

Positions 1 to 643 (MAQGSRRRKV…TPCESGWTRE (643 aa)) are necessary and sufficient for the interaction with SQSTM1. Disordered stretches follow at residues 305 to 334 (PSED…RPGC), 663 to 714 (SIPG…GKIV), 1038 to 1057 (CAFG…SGLG), 1090 to 1209 (QPQE…EGKE), 1517 to 1544 (SLRN…SCLQ), and 1565 to 1590 (DSQP…SRNE). Basic and acidic residues predominate over residues 314–330 (SEEKDRTGVKSEKDGEG). Residues 333–610 (GCPTCQKELR…IPRLLVQPIQ (278 aa)) form the BEACH domain. Low complexity predominate over residues 668–693 (AGDQPGSSSSQASPGLLPFSAPSGSR). 2 stretches are compositionally biased toward polar residues: residues 1100–1112 (GQLS…SEAS) and 1131–1140 (VKSGDSSQDL). The span at 1145–1166 (GSEEEEEEEEGCVVLEEEEQDE) shows a compositional bias: acidic residues. WD repeat units follow at residues 1638 to 1677 (GHTG…DGTS), 1684 to 1724 (IYAQ…TLRT), 1776 to 1815 (LNPG…VLRG), 1818 to 1856 (AHEG…PTHH), and 1903 to 1933 (NFRG…RLLA).

This sequence belongs to the WD repeat WDR81 family. Interacts with WDR91; involved in early to late endosome cargo transport. Interacts with BECN1; negatively regulates the PI3 kinase/PI3K activity associated with endosomal membranes. Interacts with SQSTM1; the interaction is direct and regulates the interaction of SQSTM1 with ubiquitinated proteins. Interacts with MAP1LC3C; recruits MAP1LC3C to ubiquitinated protein aggregates in the aggrephagy process.

Its subcellular location is the early endosome membrane. It is found in the late endosome membrane. The protein resides in the lysosome membrane. It localises to the cytoplasmic vesicle. The protein localises to the autophagosome membrane. Its subcellular location is the mitochondrion. It is found in the cytoplasm. The protein resides in the cytosol. In terms of biological role, functions as a negative regulator of the PI3 kinase/PI3K activity associated with endosomal membranes via BECN1, a core subunit of the PI3K complex. By modifying the phosphatidylinositol 3-phosphate/PtdInsP3 content of endosomal membranes may regulate endosome fusion, recycling, sorting and early to late endosome transport. It is for instance, required for the delivery of cargos like BST2/tetherin from early to late endosome and thereby participates indirectly to their degradation by the lysosome. May also play a role in aggrephagy, the macroautophagic degradation of ubiquitinated protein aggregates. In this process, may regulate the interaction of SQSTM1 with ubiquitinated proteins and also recruit MAP1LC3C. May also be involved in maintenance of normal mitochondrial structure and organization. The protein is WD repeat-containing protein 81 of Rattus norvegicus (Rat).